Consider the following 83-residue polypeptide: Mitotic-spindle organizing protein 1 (83 aa).

It belongs to the MOZART1 family. In terms of assembly, part of the gamma-tubulin complex.

The protein resides in the cytoplasm. It is found in the cytoskeleton. It localises to the microtubule organizing center. The protein localises to the spindle pole body. Functionally, required for gamma-tubulin complex recruitment to the microtubule organizing center (MTOC). The protein is Mitotic-spindle organizing protein 1 of Botryotinia fuckeliana (strain B05.10) (Noble rot fungus).